A 587-amino-acid chain; its full sequence is Prolycopene isomerase 1, chloroplastic (587 aa).

The span at 1-13 (MLCLSLNSSSTSP) shows a compositional bias: low complexity. Residues 1–21 (MLCLSLNSSSTSPPKSPLHHS) are disordered. The transit peptide at 1–50 (MLCLSLNSSSTSPPKSPLHHSFSRRSMRSWVCSPRVQRKKLGFWSSPKAV) directs the protein to the chloroplast.

This sequence belongs to the carotenoid/retinoid oxidoreductase family. CrtISO subfamily. The cofactor is NAD(+). NADP(+) serves as cofactor. Requires FAD as cofactor. In terms of tissue distribution, up-regulated in the flower buds and flower lip tissue, while it is weakly expressed in leaves.

It is found in the plastid. The protein resides in the chloroplast membrane. The catalysed reaction is 7,7',9,9'-tetra-cis-lycopene = all-trans-lycopene. It functions in the pathway carotenoid biosynthesis; lycopene biosynthesis. Functionally, carotene cis-trans-isomerase that converts 7,9,9'-tri-cis-neurosporene to 9'-cis-neurosporene and 7,9,9',7'-tetra-cis-lycopene (also known as prolycopene) into all-trans-lycopene. Isomerization requires redox-active components, suggesting that isomerization is achieved by a reversible redox reaction acting at specific double bonds. Isomerizes adjacent cis-double bonds at C7 and C9 pairwise into the trans-configuration, but is incapable of isomerizing single cis-double bonds at C9 and C9'. The chain is Prolycopene isomerase 1, chloroplastic (CRTISO1) from Oncidium hybrid cultivar (Orchid).